The following is a 471-amino-acid chain: 3-isopropylmalate dehydratase large subunit (471 aa).

[4Fe-4S] cluster is bound by residues C347, C407, and C410. The segment at 417 to 443 (TLQPGERSASTSNRNFEGRQGKGGRTH) is disordered.

This sequence belongs to the aconitase/IPM isomerase family. LeuC type 1 subfamily. In terms of assembly, heterodimer of LeuC and LeuD. The cofactor is [4Fe-4S] cluster.

The enzyme catalyses (2R,3S)-3-isopropylmalate = (2S)-2-isopropylmalate. It participates in amino-acid biosynthesis; L-leucine biosynthesis; L-leucine from 3-methyl-2-oxobutanoate: step 2/4. Catalyzes the isomerization between 2-isopropylmalate and 3-isopropylmalate, via the formation of 2-isopropylmaleate. This is 3-isopropylmalate dehydratase large subunit from Nocardioides sp. (strain ATCC BAA-499 / JS614).